We begin with the raw amino-acid sequence, 573 residues long: Dilute domain-containing protein SPAC25B8.08 (573 aa).

One can recognise a Dilute domain in the interval 180-464; it reads NAFLCEVNQV…LKKLDAFHEE (285 aa).

It is found in the cytoplasm. The protein resides in the golgi apparatus. The chain is Dilute domain-containing protein SPAC25B8.08 from Schizosaccharomyces pombe (strain 972 / ATCC 24843) (Fission yeast).